A 558-amino-acid polypeptide reads, in one-letter code: Dihydroxy-acid dehydratase (558 aa).

Mg(2+) is bound at residue Asp78. Cys119 is a [2Fe-2S] cluster binding site. 2 residues coordinate Mg(2+): Asp120 and Lys121. An N6-carboxylysine modification is found at Lys121. Residue Cys192 coordinates [2Fe-2S] cluster. Mg(2+) is bound at residue Glu446. Ser472 (proton acceptor) is an active-site residue.

Belongs to the IlvD/Edd family. Homodimer. It depends on [2Fe-2S] cluster as a cofactor. Requires Mg(2+) as cofactor.

It catalyses the reaction (2R)-2,3-dihydroxy-3-methylbutanoate = 3-methyl-2-oxobutanoate + H2O. It carries out the reaction (2R,3R)-2,3-dihydroxy-3-methylpentanoate = (S)-3-methyl-2-oxopentanoate + H2O. It functions in the pathway amino-acid biosynthesis; L-isoleucine biosynthesis; L-isoleucine from 2-oxobutanoate: step 3/4. The protein operates within amino-acid biosynthesis; L-valine biosynthesis; L-valine from pyruvate: step 3/4. Functionally, functions in the biosynthesis of branched-chain amino acids. Catalyzes the dehydration of (2R,3R)-2,3-dihydroxy-3-methylpentanoate (2,3-dihydroxy-3-methylvalerate) into 2-oxo-3-methylpentanoate (2-oxo-3-methylvalerate) and of (2R)-2,3-dihydroxy-3-methylbutanoate (2,3-dihydroxyisovalerate) into 2-oxo-3-methylbutanoate (2-oxoisovalerate), the penultimate precursor to L-isoleucine and L-valine, respectively. This chain is Dihydroxy-acid dehydratase, found in Campylobacter jejuni subsp. jejuni serotype O:2 (strain ATCC 700819 / NCTC 11168).